The chain runs to 156 residues: uncharacterized protein (156 aa).

The N-terminal stretch at 1 to 22 is a signal peptide; sequence MFGKVSSLLVFASFLIIQGAFA. A lipid anchor (GPI-anchor amidated serine) is attached at Ser-129. A propeptide spans 130 to 156 (removed in mature form); it reads GSPVRFSKSSLLIVSLLSIAAFAALVL.

It localises to the cell membrane. This is an uncharacterized protein from Schizosaccharomyces pombe (strain 972 / ATCC 24843) (Fission yeast).